Consider the following 468-residue polypeptide: Glutamate--tRNA ligase (468 aa).

The 'HIGH' region signature appears at 11-21; sequence PSPTGFIHLGN. The short motif at 243–247 is the 'KMSKS' region element; sequence KMSKR. K246 contacts ATP.

The protein belongs to the class-I aminoacyl-tRNA synthetase family. Glutamate--tRNA ligase type 1 subfamily. In terms of assembly, monomer.

It is found in the cytoplasm. The catalysed reaction is tRNA(Glu) + L-glutamate + ATP = L-glutamyl-tRNA(Glu) + AMP + diphosphate. Its function is as follows. Catalyzes the attachment of glutamate to tRNA(Glu) in a two-step reaction: glutamate is first activated by ATP to form Glu-AMP and then transferred to the acceptor end of tRNA(Glu). This chain is Glutamate--tRNA ligase, found in Cupriavidus pinatubonensis (strain JMP 134 / LMG 1197) (Cupriavidus necator (strain JMP 134)).